The sequence spans 201 residues: uncharacterized protein (201 aa).

This is an uncharacterized protein from Caenorhabditis elegans.